The chain runs to 271 residues: 5-deoxy-glucuronate isomerase (271 aa).

It belongs to the isomerase IolB family.

The enzyme catalyses 5-deoxy-D-glucuronate = 5-dehydro-2-deoxy-D-gluconate. It participates in polyol metabolism; myo-inositol degradation into acetyl-CoA; acetyl-CoA from myo-inositol: step 4/7. In terms of biological role, involved in the isomerization of 5-deoxy-glucuronate (5DG) to 5-dehydro-2-deoxy-D-gluconate (DKG or 2-deoxy-5-keto-D-gluconate). This Lacticaseibacillus casei (Lactobacillus casei) protein is 5-deoxy-glucuronate isomerase.